Consider the following 74-residue polypeptide: Large ribosomal subunit protein bL28 (74 aa).

The protein belongs to the bacterial ribosomal protein bL28 family.

The chain is Large ribosomal subunit protein bL28 from Desulforapulum autotrophicum (strain ATCC 43914 / DSM 3382 / VKM B-1955 / HRM2) (Desulfobacterium autotrophicum).